The following is a 184-amino-acid chain: Nucleoporin-62 C-terminal-like protein (184 aa).

Residues 117-151 (RILHGEVNKVKLDQKRLEQELDFILSQQQELEFLL) adopt a coiled-coil conformation.

It belongs to the nucleoporin NSP1/NUP62 family.

This chain is Nucleoporin-62 C-terminal-like protein (NUP62CL), found in Homo sapiens (Human).